We begin with the raw amino-acid sequence, 243 residues long: uncharacterized protein (243 aa).

The N-terminal stretch at 1-19 (MKSLPLLGILAFAANRLSA) is a signal peptide. Residues Asn112 and Asn206 are each glycosylated (N-linked (GlcNAc...) asparagine).

This is an uncharacterized protein from Encephalitozoon cuniculi (strain GB-M1) (Microsporidian parasite).